The following is a 182-amino-acid chain: Ribulose bisphosphate carboxylase small subunit, chloroplastic 5 (182 aa).

A chloroplast-targeting transit peptide spans 1–49 (MASSLMSNAATTMAAATTTAQANMVAPFNGLKSISAFPVTRKNNDITSV).

It belongs to the RuBisCO small chain family. In terms of assembly, heterohexadecamer of 8 large and 8 small subunits.

It is found in the plastid. The protein resides in the chloroplast. Its function is as follows. RuBisCO catalyzes two reactions: the carboxylation of D-ribulose 1,5-bisphosphate, the primary event in carbon dioxide fixation, as well as the oxidative fragmentation of the pentose substrate. Both reactions occur simultaneously and in competition at the same active site. Although the small subunit is not catalytic it is essential for maximal activity. This is Ribulose bisphosphate carboxylase small subunit, chloroplastic 5 from Mesembryanthemum crystallinum (Common ice plant).